Reading from the N-terminus, the 33-residue chain is Protamine TP14 (33 aa).

Residues 1 to 33 are disordered; the sequence is MPRRRRSSRPPVRRRRRPRVSRRRRRRGGRRRR.

In terms of tissue distribution, testis.

The protein localises to the nucleus. It is found in the chromosome. Protamines substitute for histones in the chromatin of sperm during the haploid phase of spermatogenesis. They compact sperm DNA into a highly condensed, stable and inactive complex. In Oncorhynchus mykiss (Rainbow trout), this protein is Protamine TP14.